The chain runs to 419 residues: Subtilisin-like protease 2 (419 aa).

The first 16 residues, M1 to G16, serve as a signal peptide directing secretion. Residues D17–A122 constitute a propeptide that is removed on maturation. Residues Q36 to A122 form the Inhibitor I9 domain. In terms of domain architecture, Peptidase S8 spans R131–K419. Residues D169 and H201 each act as charge relay system in the active site. 3 N-linked (GlcNAc...) asparagine glycosylation sites follow: N248, N261, and N348. The active-site Charge relay system is the S357. An N-linked (GlcNAc...) asparagine glycan is attached at N388.

Belongs to the peptidase S8 family.

The protein localises to the secreted. Its function is as follows. Secreted subtilisin-like serine protease with keratinolytic activity that contributes to pathogenicity. This Arthroderma benhamiae (Trichophyton mentagrophytes) protein is Subtilisin-like protease 2 (SUB2).